A 596-amino-acid polypeptide reads, in one-letter code: MPTQRDSSTMSHTVAGGGSGDHSHQVRVKAYYRGDIMITHFEPSISFEGLCNEVRDMCSFDNEQLFTMKWIDEEGDPCTVSSQLELEEAFRLYELNKDSELLIHVFPCVPERPGMPCPGEDKSIYRRGARRWRKLYCANGHTFQAKRFNRRAHCAICTDRIWGLGRQGYKCINCKLLVHKKCHKLVTIECGRHSLPPEPMMPMDQSSMHSDHAQTVIPYNPSSHESLDQVGEEKEAMNTRESGKASSSLGLQDFDLLRVIGRGSYAKVLLVRLKKTDRIYAMKVVKKELVNDDEDIDWVQTEKHVFEQASNHPFLVGLHSCFQTESRLFFVIEYVNGGDLMFHMQRQRKLPEEHARFYSAEISLALNYLHERGIIYRDLKLDNVLLDSEGHIKLTDYGMCKEGLRPGDTTSTFCGTPNYIAPEILRGEDYGFSVDWWALGVLMFEMMAGRSPFDIVGSSDNPDQNTEDYLFQVILEKQIRIPRSLSVKAASVLKSFLNKDPKERLGCHPQTGFADIQGHPFFRNVDWDMMEQKQVVPPFKPNISGEFGLDNFDSQFTNEPVQLTPDDDDIVRKIDQSEFEGFEYINPLLMSAEECV.

Over residues methionine 1 to histidine 12 the composition is skewed to polar residues. The interval methionine 1–serine 23 is disordered. Proline 2 is modified (N-acetylproline). The segment at proline 2–valine 28 is required for interaction with RAB2. Positions proline 2–aspartate 253 are regulatory domain. Threonine 3 is modified (phosphothreonine). 2 positions are modified to phosphoserine: serine 7 and serine 8. Threonine 9 bears the Phosphothreonine mark. In terms of domain architecture, PB1 spans glutamine 25 to cysteine 108. Positions aspartate 72 to arginine 91 are interaction with PARD6A. Positions tyrosine 125–lysine 134 match the Pseudosubstrate motif. A Phorbol-ester/DAG-type zinc finger spans residues glycine 140 to cysteine 190. The tract at residues proline 221 to serine 246 is disordered. Residues glutamate 225–glycine 243 are compositionally biased toward basic and acidic residues. In terms of domain architecture, Protein kinase spans phenylalanine 254–phenylalanine 522. Isoleucine 260 to valine 268 is an ATP binding site. 2 positions are modified to phosphotyrosine; by SRC: tyrosine 265 and tyrosine 280. An ATP-binding site is contributed by lysine 283. Residue tyrosine 334 is modified to Phosphotyrosine; by SRC. Aspartate 378 (proton acceptor) is an active-site residue. Residue threonine 412 is modified to Phosphothreonine; by PDPK1. The AGC-kinase C-terminal domain maps to arginine 523 to glutamate 594. Phosphothreonine is present on threonine 564.

The protein belongs to the protein kinase superfamily. AGC Ser/Thr protein kinase family. PKC subfamily. In terms of assembly, forms a complex with SQSTM1 and MP2K5. Interacts directly with SQSTM1. Interacts with IKBKB. Interacts with PARD6A, PARD6B and PARD6G. Part of a quaternary complex containing aPKC, PARD3, a PARD6 protein (PARD6A, PARD6B or PARD6G) and a GTPase protein (CDC42 or RAC1). Part of a complex with LLGL1 and PARD6B. Interacts with ADAP1/CENTA1. Interaction with SMG1, through the ZN-finger domain, activates the kinase activity. Interacts with CDK7. Forms a complex with RAB2A and GAPDH involved in recruitment onto the membrane of vesicular tubular clusters (VTCs). Interacts with ECT2 ('Thr-359' phosphorylated form). Interacts with VAMP2. Interacts with WDFY2 (via WD repeats 1-3). Phosphorylation at Thr-412 in the activation loop is not mandatory for activation. Upon neuronal growth factor (NGF) stimulation, phosphorylated by SRC at Tyr-265, Tyr-280 and Tyr-334. Phosphorylation at Tyr-265 facilitates binding to KPNB1/importin-beta regulating entry of PRKCI into the nucleus. Phosphorylation on Tyr-334 is important for NF-kappa-B stimulation. Phosphorylated at Thr-564 during the initial phase of long term potentiation.

It is found in the cytoplasm. Its subcellular location is the membrane. The protein resides in the endosome. The protein localises to the nucleus. It catalyses the reaction L-seryl-[protein] + ATP = O-phospho-L-seryl-[protein] + ADP + H(+). The enzyme catalyses L-threonyl-[protein] + ATP = O-phospho-L-threonyl-[protein] + ADP + H(+). Its activity is regulated as follows. Atypical PKCs (PRKCI and PRKCZ) exhibit an elevated basal enzymatic activity (that may be due to the interaction with SMG1 or SQSTM1) and are not regulated by diacylglycerol, phosphatidylserine, phorbol esters or calcium ions. Two specific sites, Thr-412 (activation loop of the kinase domain) and Thr-564 (turn motif), need to be phosphorylated for its full activation. Might also be a target for novel lipid activators that are elevated during nutrient-stimulated insulin secretion. Calcium- and diacylglycerol-independent serine/ threonine-protein kinase that plays a general protective role against apoptotic stimuli, is involved in NF-kappa-B activation, cell survival, differentiation and polarity, and contributes to the regulation of microtubule dynamics in the early secretory pathway. Is necessary for BCR-ABL oncogene-mediated resistance to apoptotic drug in leukemia cells, protecting leukemia cells against drug-induced apoptosis. In cultured neurons, prevents amyloid beta protein-induced apoptosis by interrupting cell death process at a very early step. In glioblastoma cells, may function downstream of phosphatidylinositol 3-kinase (PI(3)K) and PDPK1 in the promotion of cell survival by phosphorylating and inhibiting the pro-apoptotic factor BAD. Can form a protein complex in non-small cell lung cancer (NSCLC) cells with PARD6A and ECT2 and regulate ECT2 oncogenic activity by phosphorylation, which in turn promotes transformed growth and invasion. In response to nerve growth factor (NGF), acts downstream of SRC to phosphorylate and activate IRAK1, allowing the subsequent activation of NF-kappa-B and neuronal cell survival. Functions in the organization of the apical domain in epithelial cells by phosphorylating EZR. This step is crucial for activation and normal distribution of EZR at the early stages of intestinal epithelial cell differentiation. Forms a protein complex with LLGL1 and PARD6B independently of PARD3 to regulate epithelial cell polarity. Plays a role in microtubule dynamics in the early secretory pathway through interaction with RAB2A and GAPDH and recruitment to vesicular tubular clusters (VTCs). In human coronary artery endothelial cells (HCAEC), is activated by saturated fatty acids and mediates lipid-induced apoptosis. Involved in early synaptic long term potentiation phase in CA1 hippocampal cells and short term memory formation. This chain is Protein kinase C iota type (PRKCI), found in Pongo abelii (Sumatran orangutan).